Consider the following 131-residue polypeptide: Lysozyme C (131 aa).

The C-type lysozyme domain occupies 2-131 (KIYEQCELAR…VSQWIKGCKL (130 aa)). Cystine bridges form between Cys-7–Cys-129, Cys-31–Cys-117, Cys-66–Cys-82, and Cys-78–Cys-96. Catalysis depends on residues Glu-36 and Asp-54.

The protein belongs to the glycosyl hydrolase 22 family. In terms of assembly, monomer.

It is found in the secreted. It catalyses the reaction Hydrolysis of (1-&gt;4)-beta-linkages between N-acetylmuramic acid and N-acetyl-D-glucosamine residues in a peptidoglycan and between N-acetyl-D-glucosamine residues in chitodextrins.. Functionally, lysozymes have primarily a bacteriolytic function; those in tissues and body fluids are associated with the monocyte-macrophage system and enhance the activity of immunoagents. Has strong bacteriolytic activity against M.luteus and V.cholerae, weak bacteriolytic activity against P.aeruginosa and no activity against A.hydrophila. This chain is Lysozyme C (LYZ), found in Pelodiscus sinensis (Chinese softshell turtle).